The chain runs to 113 residues: Prefoldin subunit beta (113 aa).

It belongs to the prefoldin subunit beta family. In terms of assembly, heterohexamer of two alpha and four beta subunits.

The protein localises to the cytoplasm. In terms of biological role, molecular chaperone capable of stabilizing a range of proteins. Seems to fulfill an ATP-independent, HSP70-like function in archaeal de novo protein folding. The chain is Prefoldin subunit beta from Methanococcus maripaludis (strain C7 / ATCC BAA-1331).